The following is a 469-amino-acid chain: Adenosylhomocysteinase (469 aa).

3 residues coordinate substrate: threonine 63, aspartate 139, and glutamate 164. 165-167 (TTT) contributes to the NAD(+) binding site. Positions 194 and 198 each coordinate substrate. NAD(+) contacts are provided by residues asparagine 199, 228 to 233 (GYGDVG), glutamate 251, asparagine 300, 321 to 323 (IGH), and asparagine 375.

This sequence belongs to the adenosylhomocysteinase family. NAD(+) serves as cofactor.

It is found in the cytoplasm. It catalyses the reaction S-adenosyl-L-homocysteine + H2O = L-homocysteine + adenosine. It participates in amino-acid biosynthesis; L-homocysteine biosynthesis; L-homocysteine from S-adenosyl-L-homocysteine: step 1/1. In terms of biological role, may play a key role in the regulation of the intracellular concentration of adenosylhomocysteine. This chain is Adenosylhomocysteinase, found in Pseudomonas aeruginosa (strain UCBPP-PA14).